A 147-amino-acid chain; its full sequence is Large ribosomal subunit protein bL9 (147 aa).

It belongs to the bacterial ribosomal protein bL9 family.

Its function is as follows. Binds to the 23S rRNA. This Geobacter sp. (strain M21) protein is Large ribosomal subunit protein bL9.